We begin with the raw amino-acid sequence, 133 residues long: Transcriptional regulator MraZ (133 aa).

SpoVT-AbrB domains lie at Thr5–Asp47 and Thr76–Lys119.

This sequence belongs to the MraZ family. In terms of assembly, forms oligomers.

The protein resides in the cytoplasm. It is found in the nucleoid. The sequence is that of Transcriptional regulator MraZ from Mycoplasma mycoides subsp. mycoides SC (strain CCUG 32753 / NCTC 10114 / PG1).